A 176-amino-acid chain; its full sequence is MDKYVQIGLITKPHGLRGEVCVVSYADSPFLMQERIFLQAGKGPCVPYRVRSSRRHSGTELLLLEGIDDRNAAEKLRQHKVLIPHAELPELEDDEVYIEDILGFTVVLDEDGSTLGTLTAFSAPTPEQEVWEITTPDGKEVLFPAAEEFVAEIDVDSETIRITPPPGLLEIYLSGS.

Residues Asp-93–Leu-168 enclose the PRC barrel domain.

This sequence belongs to the RimM family. Binds ribosomal protein uS19.

It is found in the cytoplasm. In terms of biological role, an accessory protein needed during the final step in the assembly of 30S ribosomal subunit, possibly for assembly of the head region. Essential for efficient processing of 16S rRNA. May be needed both before and after RbfA during the maturation of 16S rRNA. It has affinity for free ribosomal 30S subunits but not for 70S ribosomes. The chain is Ribosome maturation factor RimM from Oleidesulfovibrio alaskensis (strain ATCC BAA-1058 / DSM 17464 / G20) (Desulfovibrio alaskensis).